We begin with the raw amino-acid sequence, 391 residues long: Aspartic protease 17 (391 aa).

The signal sequence occupies residues 1–15 (MHLIFLLFLAPFCSA). In terms of domain architecture, Peptidase A1 spans 65 to 385 (YLGNFTVGTP…DIGNARIGFA (321 aa)). Asn-68 carries an N-linked (GlcNAc...) asparagine glycan. Asp-83 is an active-site residue. N-linked (GlcNAc...) asparagine glycosylation is present at Asn-108. Asp-274 is an active-site residue. Cys-309 and Cys-345 form a disulfide bridge.

This sequence belongs to the peptidase A1 family. As to expression, expressed in intestinal cells.

Its subcellular location is the secreted. Its function is as follows. Aspartic proteinase. This is Aspartic protease 17 from Caenorhabditis elegans.